A 644-amino-acid chain; its full sequence is MSLIECKNINRYFGSGENRVHILKDISLSIEKGDFVAIIGQSGSGKSTLMNILGCLDTAGSGSYRIDGIETAKMQPDELAALRRERFGFIFQRYNLLSSLTARDNVALPAVYMGAGGKERSARADKLLQDLGLASKEGNKPSELSGGQQQRVSIARALMNGGEIIFADEPTGALDTASGKNVMEIIHKLHEAGHTVIMVTHDPGIAANANRVIEIRDGEIISDTSKNPEIPASNVGRIQEKASWSFYYDQFVEAFRMSVQAVLAHKMRSLLTMLGIIIGIASVVSVVALGNGSQKKILEDISSIGTNTISIFPGRGFGDRRSGRIKTLTIDDAKIIAKQSYVASATPMTSSGGTLTYRNTDLTASLYGVGEQYFDVRGLKLETGRLFDENDVKEDAQVVVIDQNVKDKLFADSDPLGKTILFRKRPLTVIGVMKKDENAFGNSDVLMLWSPYTTVMHQITGESHTNSITVKIKDNANTQVAEKGLTDLLKARHGTEDFFMNNSDSIRQIVESTTGTMKLLISSIALISLVVGGIGVMNIMLVSVTERTKEIGIRMAIGARRGNILQQFLIEAVLICVIGGLVGVGLSAAVSLVFNHFVTDFPMDISAMSVIGAVACSTGIGIAFGFMPANKAAKLNPIDALAQD.

The ABC transporter domain maps to 4–242 (IECKNINRYF…SNVGRIQEKA (239 aa)). 40-47 (GQSGSGKS) is a binding site for ATP. Helical transmembrane passes span 270-290 (LLTM…VALG), 524-544 (IALI…LVSV), 574-594 (LICV…SLVF), and 607-627 (AMSV…FGFM).

This sequence belongs to the ABC transporter superfamily. Macrolide exporter (TC 3.A.1.122) family. As to quaternary structure, homodimer.

Its subcellular location is the cell inner membrane. In terms of biological role, non-canonical ABC transporter that contains transmembrane domains (TMD), which form a pore in the inner membrane, and an ATP-binding domain (NBD), which is responsible for energy generation. Confers resistance against macrolides. The protein is Macrolide export ATP-binding/permease protein MacB of Neisseria meningitidis serogroup A / serotype 4A (strain DSM 15465 / Z2491).